The sequence spans 119 residues: Large ribosomal subunit protein uL18 (119 aa).

The protein belongs to the universal ribosomal protein uL18 family. In terms of assembly, part of the 50S ribosomal subunit; part of the 5S rRNA/L5/L18/L25 subcomplex. Contacts the 5S and 23S rRNAs.

In terms of biological role, this is one of the proteins that bind and probably mediate the attachment of the 5S RNA into the large ribosomal subunit, where it forms part of the central protuberance. The protein is Large ribosomal subunit protein uL18 of Clostridium botulinum (strain Loch Maree / Type A3).